The chain runs to 1940 residues: Protein ORF1940 (1940 aa).

4 TPR repeats span residues 119–153 (IKAC…ALQY), 155–186 (FQSL…LQQI), 480–513 (RLPD…GLHG), and 617–652 (GKSM…SPTS). 2 disordered regions span residues 1160-1239 (PSKV…PGAV) and 1519-1571 (KGPS…TVTS). A compositionally biased stretch (low complexity) spans 1164–1185 (QNTTQPSATQNTTTQPTAQNTS). Residues 1186-1200 (LPGATQNTTLPTPSK) show a composition bias toward polar residues. Composition is skewed to low complexity over residues 1201–1235 (VQNT…NTSL), 1521–1539 (PSTT…MTPP), and 1561–1571 (TPGSGSQTVTS). Residues 1691 to 1724 (KDLNKSVGTSVVEEAKYNSTLQTYLAGLGIKDLN) form a TPR 5 repeat. Residues 1862–1940 (TTTHHITPPP…AEQAEQVLLI (79 aa)) are disordered. The segment covering 1868 to 1883 (TPPPPPPPPPPPPPPK) has biased composition (pro residues). Over residues 1884-1894 (TQTITTTTQIT) the composition is skewed to low complexity. Positions 1895–1912 (PPSPPPTPPPPPPPPKSP) are enriched in pro residues.

The sequence is that of Protein ORF1940 from Acidianus convivator (ATV).